A 329-amino-acid chain; its full sequence is Phenylalanine--tRNA ligase alpha subunit (329 aa).

A Mg(2+)-binding site is contributed by E254.

Belongs to the class-II aminoacyl-tRNA synthetase family. Phe-tRNA synthetase alpha subunit type 1 subfamily. Tetramer of two alpha and two beta subunits. It depends on Mg(2+) as a cofactor.

It is found in the cytoplasm. It carries out the reaction tRNA(Phe) + L-phenylalanine + ATP = L-phenylalanyl-tRNA(Phe) + AMP + diphosphate + H(+). This chain is Phenylalanine--tRNA ligase alpha subunit, found in Histophilus somni (strain 2336) (Haemophilus somnus).